The primary structure comprises 149 residues: Endoribonuclease YbeY (149 aa).

Zn(2+) is bound by residues histidine 116, histidine 120, and histidine 126.

The protein belongs to the endoribonuclease YbeY family. Zn(2+) serves as cofactor.

The protein resides in the cytoplasm. In terms of biological role, single strand-specific metallo-endoribonuclease involved in late-stage 70S ribosome quality control and in maturation of the 3' terminus of the 16S rRNA. The chain is Endoribonuclease YbeY from Nocardioides sp. (strain ATCC BAA-499 / JS614).